Reading from the N-terminus, the 418-residue chain is Serine protease inhibitor A3K (418 aa).

The first 21 residues, 1–21, serve as a signal peptide directing secretion; the sequence is MAFIVAMGMILMAGICPAVLC. Residues Asn39, Asn105, Asn185, and Asn270 are each glycosylated (N-linked (GlcNAc...) asparagine). The segment at 369 to 394 is RCL; that stretch reads GTEAAAATGVIGGIRKAILPAVHFNR.

Belongs to the serpin family. In terms of tissue distribution, expressed in liver and secreted in plasma.

Its subcellular location is the secreted. Functionally, contrapsin inhibits trypsin-like proteases. The chain is Serine protease inhibitor A3K (Serpina3k) from Mus musculus (Mouse).